The following is a 255-amino-acid chain: Thiazole synthase (255 aa).

Residue K96 is the Schiff-base intermediate with DXP of the active site. 1-deoxy-D-xylulose 5-phosphate-binding positions include G157, 183-184 (AG), and 205-206 (NT).

The protein belongs to the ThiG family. As to quaternary structure, homotetramer. Forms heterodimers with either ThiH or ThiS.

The protein resides in the cytoplasm. It catalyses the reaction [ThiS sulfur-carrier protein]-C-terminal-Gly-aminoethanethioate + 2-iminoacetate + 1-deoxy-D-xylulose 5-phosphate = [ThiS sulfur-carrier protein]-C-terminal Gly-Gly + 2-[(2R,5Z)-2-carboxy-4-methylthiazol-5(2H)-ylidene]ethyl phosphate + 2 H2O + H(+). It functions in the pathway cofactor biosynthesis; thiamine diphosphate biosynthesis. Catalyzes the rearrangement of 1-deoxy-D-xylulose 5-phosphate (DXP) to produce the thiazole phosphate moiety of thiamine. Sulfur is provided by the thiocarboxylate moiety of the carrier protein ThiS. In vitro, sulfur can be provided by H(2)S. The sequence is that of Thiazole synthase from Anoxybacillus flavithermus (strain DSM 21510 / WK1).